Here is a 224-residue protein sequence, read N- to C-terminus: Transmembrane protein C16orf54 (224 aa).

O-linked (GalNAc...) threonine glycosylation occurs at threonine 4. Residues 32–52 (IPIMLVLATLAALFILTTAVL) form a helical membrane-spanning segment. Disordered regions lie at residues 104 to 138 (TDRAPEPPTQVGTLEARATAPPAPSAPNSAPSNLG) and 152 to 203 (WGPQ…GLQP). A phosphothreonine mark is found at threonine 112 and threonine 116. A Phosphoserine modification is found at serine 194.

O-glycosylated with core 1 or possibly core 8 glycans.

The protein localises to the membrane. The polypeptide is Transmembrane protein C16orf54 (C16orf54) (Homo sapiens (Human)).